Consider the following 601-residue polypeptide: Potassium voltage-gated channel subfamily A member 5 (601 aa).

Residues 1-200 are tetramerization domain; it reads MEIALVPLEN…FYQLGDEAME (200 aa). Topologically, residues 1 to 236 are cytoplasmic; the sequence is MEIALVPLEN…LIFEYPESSG (236 aa). The interval 19 to 93 is disordered; that stretch reads GGEAGTGCSQ…DEEGEGDPAL (75 aa). Over residues 65-74 the composition is skewed to pro residues; the sequence is RPLPPLPQDP. Lys-210 participates in a covalent cross-link: Glycyl lysine isopeptide (Lys-Gly) (interchain with G-Cter in SUMO). A helical membrane pass occupies residues 237–258; sequence SARGIAIVSVLVILISIITFCL. Over 259–312 the chain is Extracellular; that stretch reads ETLPEFRDERELLRHPPVPHQPLGPSRGANGSGPLAPPSGPTVAPLLPRTLADP. The disordered stretch occupies residues 275 to 297; that stretch reads PVPHQPLGPSRGANGSGPLAPPS. An N-linked (GlcNAc...) asparagine glycan is attached at Asn-288. The helical transmembrane segment at 313-334 threads the bilayer; the sequence is FFIVETTCVIWFTFELLVRFFA. Cys-335 carries S-palmitoyl cysteine lipidation. At 335–345 the chain is on the cytoplasmic side; the sequence is CPSKAEFSRNI. The helical transmembrane segment at 346–366 threads the bilayer; that stretch reads MNIIDVVAIFPYFITLGTELA. Residues 367 to 383 lie on the Extracellular side of the membrane; the sequence is EQPGGGGGGQNGQQAMS. A helical; Voltage-sensor transmembrane segment spans residues 384–404; it reads LAILRVIRLVRVFRIFKLSRH. Topologically, residues 405–419 are cytoplasmic; it reads SKGLQILGKTLQASM. The segment at 406–419 is S4-S5 linker; that stretch reads KGLQILGKTLQASM. The chain crosses the membrane as a helical span at residues 420–441; the sequence is RELGLLIFFLFIGVILFSSAVY. Over 442–455 the chain is Extracellular; it reads FAEADNQETHFSSI. The segment at residues 456-467 is an intramembrane region (helical); sequence PDAFWWAVVTMT. Residues 468–473 carry the Selectivity filter motif; that stretch reads TVGYGD. Residues 468 to 475 lie within the membrane without spanning it; it reads TVGYGDMR. The Extracellular segment spans residues 476–482; sequence PVTVGGK. The chain crosses the membrane as a helical span at residues 483-511; the sequence is IVGSLCAIAGVLTIALPVPVIVSNFNYFY. The Cytoplasmic portion of the chain corresponds to 512–601; the sequence is HRETDHEEQA…CLDTSRETDL (90 aa). Residues 521–545 are disordered; sequence AALKEEQGSQSHGTGLDSGGPRKAS. Lys-524 is covalently cross-linked (Glycyl lysine isopeptide (Lys-Gly) (interchain with G-Cter in SUMO)). The PDZ-binding motif lies at 599-601; it reads TDL.

This sequence belongs to the potassium channel family. A (Shaker) (TC 1.A.1.2) subfamily. Kv1.5/KCNA5 sub-subfamily. Homotetramer and heterotetramer of potassium channel proteins. Interacts with DLG1, which enhances channel currents. Forms a ternary complex with DLG1 and CAV3. Interacts with KCNAB1. Interacts with UBE2I. Interacts with XIRP2; the interaction is required for normal action potential configuration in the heart. In terms of processing, glycosylated. Post-translationally, sumoylated on Lys-210, and Lys-524, preferentially with SUMO3. Sumoylation regulates the voltage sensitivity of the channel.

The protein resides in the cell membrane. The enzyme catalyses K(+)(in) = K(+)(out). Functionally, voltage-gated potassium channel that mediates transmembrane potassium transport in excitable membranes. Forms tetrameric potassium-selective channels through which potassium ions pass in accordance with their electrochemical gradient. The channel alternates between opened and closed conformations in response to the voltage difference across the membrane. Can form functional homotetrameric channels and heterotetrameric channels that contain variable proportions of KCNA1, KCNA2, KCNA4, KCNA5, and possibly other family members as well; channel properties depend on the type of alpha subunits that are part of the channel. Channel properties are modulated by cytoplasmic beta subunits that regulate the subcellular location of the alpha subunits and promote rapid inactivation. Homotetrameric channels display rapid activation and slow inactivation. Required for normal electrical conduction including formation of the infranodal ventricular conduction system and normal action potential configuration, as a result of its interaction with XIRP2. May play a role in regulating the secretion of insulin in normal pancreatic islets. In Mustela putorius furo (European domestic ferret), this protein is Potassium voltage-gated channel subfamily A member 5 (KCNA5).